A 547-amino-acid polypeptide reads, in one-letter code: G protein-coupled receptor associated sorting protein 3 (547 aa).

The segment covering 1 to 10 (MAGTKNKTRA) has biased composition (basic residues). Disordered stretches follow at residues 1–32 (MAGTKNKTRAQAKTEKKAAIQAKAGAEREATG) and 80–102 (TLGKAMGDFTPKAGNESTSSTCK).

Belongs to the GPRASP family. In terms of assembly, homodimer. Highly expressed in brain. Not expressed in lung or liver. Down-regulated in brain from patients suffering from Alzheimer disease.

The protein resides in the cytoplasm. The protein localises to the nucleus. In terms of biological role, survival and differentiation promoting protein that plays a role in the regulation of neurosynaptogenesis. Induces phosphatase PP2A activity which results in APP dephosphorylation and inhibits BACE1-mediated processing of APP. This Homo sapiens (Human) protein is G protein-coupled receptor associated sorting protein 3.